The chain runs to 245 residues: 1-(5-phosphoribosyl)-5-[(5-phosphoribosylamino)methylideneamino] imidazole-4-carboxamide isomerase (245 aa).

Aspartate 7 functions as the Proton acceptor in the catalytic mechanism. The Proton donor role is filled by aspartate 129.

Belongs to the HisA/HisF family.

The protein localises to the cytoplasm. It carries out the reaction 1-(5-phospho-beta-D-ribosyl)-5-[(5-phospho-beta-D-ribosylamino)methylideneamino]imidazole-4-carboxamide = 5-[(5-phospho-1-deoxy-D-ribulos-1-ylimino)methylamino]-1-(5-phospho-beta-D-ribosyl)imidazole-4-carboxamide. It participates in amino-acid biosynthesis; L-histidine biosynthesis; L-histidine from 5-phospho-alpha-D-ribose 1-diphosphate: step 4/9. This Escherichia coli (strain ATCC 8739 / DSM 1576 / NBRC 3972 / NCIMB 8545 / WDCM 00012 / Crooks) protein is 1-(5-phosphoribosyl)-5-[(5-phosphoribosylamino)methylideneamino] imidazole-4-carboxamide isomerase.